Consider the following 229-residue polypeptide: Large ribosomal subunit protein uL1 (229 aa).

Belongs to the universal ribosomal protein uL1 family. Part of the 50S ribosomal subunit.

Binds directly to 23S rRNA. The L1 stalk is quite mobile in the ribosome, and is involved in E site tRNA release. Functionally, protein L1 is also a translational repressor protein, it controls the translation of the L11 operon by binding to its mRNA. The sequence is that of Large ribosomal subunit protein uL1 from Histophilus somni (strain 2336) (Haemophilus somnus).